The sequence spans 236 residues: Geranylgeranylglyceryl phosphate synthase (236 aa).

Residue K13 participates in sn-glycerol 1-phosphate binding. 2 residues coordinate Mg(2+): D15 and T42. Residues 161–166 (YVEYSG), G191, and 211–212 (GD) contribute to the sn-glycerol 1-phosphate site.

It belongs to the GGGP/HepGP synthase family. Group I subfamily. Mg(2+) is required as a cofactor.

It is found in the cytoplasm. The catalysed reaction is sn-glycerol 1-phosphate + (2E,6E,10E)-geranylgeranyl diphosphate = sn-3-O-(geranylgeranyl)glycerol 1-phosphate + diphosphate. Its pathway is membrane lipid metabolism; glycerophospholipid metabolism. Its function is as follows. Prenyltransferase that catalyzes the transfer of the geranylgeranyl moiety of geranylgeranyl diphosphate (GGPP) to the C3 hydroxyl of sn-glycerol-1-phosphate (G1P). This reaction is the first ether-bond-formation step in the biosynthesis of archaeal membrane lipids. This Halobacterium salinarum (strain ATCC 700922 / JCM 11081 / NRC-1) (Halobacterium halobium) protein is Geranylgeranylglyceryl phosphate synthase.